The following is a 534-amino-acid chain: Acetyltransferase MATC1 (534 aa).

Catalysis depends on proton acceptor residues histidine 186 and aspartate 459.

Belongs to the plant acyltransferase family.

The protein resides in the cell membrane. Its pathway is secondary metabolite biosynthesis. Acetyltransferase; part of the gene cluster that mediates the biosynthesis of mannosylerythritol lipids (MELs), surface-active substances that enhance the availability of water-insoluble substrates. Mannosylerythritol lipid production is responsible for hemolytic activity of Ustilago maydis. Depending on the number of acetyl groups, mannosylerythritol lipids can be differentiated into MEL A (fully acetylated), MEL B and MEL C (monoacetylated at R-6 and R-4, respectively), and the fully deacetylated MEL D. The first step in the pathway is the generation of mannosylerythritol by the glycosyltransferase EMT1 which catalyzes the transfer of GDP-mannose to the C-4 atom of meso-erythritol. This reaction has to be stereospecific, since only mannosyl-D-erythritol is generated. The produced disaccharide is subsequently acylated with fatty acids of various lengths derived from the peroxisomal beta-oxidation by the peroxisomal acyltransferases MAC1 and MAC2 at positions C-2 and C-3, repectively. The existence of MEL derivatives which carry an acetyl group at C-2 implies that at least MAC1 also accepts acetyl-CoA as a donor. The final step of MEL biosynthesis is the acetylation of the fully acylated mannosylerythritol lipids catalyzed by the acetyl-CoA-dependent acetyltransferase MAT1. MAT1 displays a relaxed regioselectivity and is able to transfer acetylgroups to both positions C-4 and C-6 of the mannosyl moiety. In Mycosarcoma maydis (Corn smut fungus), this protein is Acetyltransferase MATC1.